Here is a 502-residue protein sequence, read N- to C-terminus: MQVTMRGISKAFGPVKVLENVEFTLRGGEIHALMGENGAGKSTLMKILSGVHRADAGEILLDGRKAELRSTEAAEAAGIAIIHQELNLIPQLSVMENLFLGREPSRFGIIDYAAMRREARAQLEALGAGGIDPDAEAGSLSIGQQQMVEIAKALALNARVLIMDEPTAALTEREIDRLFELMAQLRENGAAIVYVSHRMEEIFRVCDRISVLRDGCFVGEREIARTDFDEVVRMMVGREIGDRYPKREAAPGEVRLKVENLADENMIAGIGFEVRAGEVLGIAGLMGSGRSDILKTLFGAKRRTAGRVELDGKELKVAAPGDAIAAGLGFVPEDRKSKGLVLGMSLRENATLVHLDQYARLGVVSAAEEKRAVDGLIAQLRIRARDAELDVKSLSGGNQQKVVFAKWLANPPKVLLLDEPTRGVDVGGKAEIYHIVNQLAAAGTAIVMVSSELPEVLALSNRILVLHEGRQAGIFDAAGCSQETLMAAATGGAVHSETRKQA.

2 ABC transporter domains span residues 3–239 (VTMR…VGRE) and 249–493 (AAPG…TGGA). Residue 35-42 (GENGAGKS) participates in ATP binding.

It belongs to the ABC transporter superfamily. Ribose importer (TC 3.A.1.2.1) family. The complex is composed of an ATP-binding protein (RbsA), two transmembrane proteins (RbsC) and a solute-binding protein (RbsB).

It is found in the cell inner membrane. The catalysed reaction is D-ribose(out) + ATP + H2O = D-ribose(in) + ADP + phosphate + H(+). In terms of biological role, part of the ABC transporter complex RbsABC involved in ribose import. Responsible for energy coupling to the transport system. In Chromobacterium violaceum (strain ATCC 12472 / DSM 30191 / JCM 1249 / CCUG 213 / NBRC 12614 / NCIMB 9131 / NCTC 9757 / MK), this protein is Ribose import ATP-binding protein RbsA.